A 758-amino-acid polypeptide reads, in one-letter code: Transmembrane E3 ubiquitin-protein ligase 1 (758 aa).

Positions 1 to 26 are cleaved as a signal peptide; the sequence is MEIDGNTLVFIIVILFLFFSSPGGDG. At 27–398 the chain is on the lumenal side; it reads VSSQYEFNQL…YELKIMSIRK (372 aa). Residues 399–419 form a helical membrane-spanning segment; that stretch reads HLLFGIALFAAQIYLLLTQMH. Topologically, residues 420-431 are cytoplasmic; the sequence is HTNTPSMVNKIS. A helical transmembrane segment spans residues 432–452; sequence FYCFSMINLVDGSLATLYFVA. The Lumenal portion of the chain corresponds to 453–458; that stretch reads ASVVPE. The chain crosses the membrane as a helical span at residues 459-479; it reads LYLPLVISAFSCFILASIFEI. Residues 480-523 are Cytoplasmic-facing; that stretch reads RYLISIYASQVNEQNVGIINLLRGNTGTYDENRPRPAFIPDEGS. A helical membrane pass occupies residues 524–544; that stretch reads IGGSLYGRFFFMLIIFTFLIL. The Lumenal portion of the chain corresponds to 545-553; it reads SSTSWPRQL. Residues 554–574 form a helical membrane-spanning segment; that stretch reads RMVFEYILIFILNSYWIPQIF. The Cytoplasmic portion of the chain corresponds to 575–602; it reads RNAVKGIPSRRERARSSIGGNRSQNKMP. A helical membrane pass occupies residues 603–623; it reads LLWSFVIGTTIIRSLPVVYVF. Residues 624–635 lie on the Lumenal side of the membrane; sequence TYSSNVFRHHKD. The chain crosses the membrane as a helical span at residues 636 to 656; sequence VHFVVFLSLWLLFQISILYSQ. The Cytoplasmic portion of the chain corresponds to 657–758; sequence DVLGSRWFLP…PVCRSPLPPL (102 aa). The segment at 699-752 adopts an RING-type; atypical zinc-finger fold; sequence CAICMSDVPIYIEEIPETHKVDQHSYMVTPCNHVFHTSCLENWMNYKLQCPVCR.

As to quaternary structure, component of the DSC E3 ligase complexes composed of at least TUL1, DSC2, DSC3, UBX3, CDC48 as well as VLD1 for the vacuole-localized complex or GLD1 for the Golgi/endosome-localized complex. Interacts with UBC4.

The protein localises to the golgi apparatus membrane. It catalyses the reaction S-ubiquitinyl-[E2 ubiquitin-conjugating enzyme]-L-cysteine + [acceptor protein]-L-lysine = [E2 ubiquitin-conjugating enzyme]-L-cysteine + N(6)-ubiquitinyl-[acceptor protein]-L-lysine.. Its pathway is protein modification; protein ubiquitination. Functionally, catalytic component of the DSC E3 ubiquitin ligase complexes that tag proteins present in Golgi, endosome and vacuole membranes and function in protein homeostasis under non-stress conditions and support a role in protein quality control. Mediates ubiquitination of vacuolar proteins such as CPS1, PPN1, PEP12 and other proteins containing exposed hydrophilic residues within their transmembrane domains, leading to their sorting into internal vesicles in late endosomes. Targets also the unpalmitoylated endosomal SNARE TLG1 to the MVB pathway. The polypeptide is Transmembrane E3 ubiquitin-protein ligase 1 (TUL1) (Saccharomyces cerevisiae (strain ATCC 204508 / S288c) (Baker's yeast)).